Here is a 77-residue protein sequence, read N- to C-terminus: Translation initiation factor IF-1, chloroplastic (77 aa).

An S1-like domain is found at 1-71 (MKEQKWIHEG…TRGRIIYRLR (71 aa)).

The protein belongs to the IF-1 family. In terms of assembly, component of the 30S ribosomal translation pre-initiation complex which assembles on the 30S ribosome in the order IF-2 and IF-3, IF-1 and N-formylmethionyl-tRNA(fMet); mRNA recruitment can occur at any time during PIC assembly.

It localises to the plastid. It is found in the chloroplast. Functionally, one of the essential components for the initiation of protein synthesis. Stabilizes the binding of IF-2 and IF-3 on the 30S subunit to which N-formylmethionyl-tRNA(fMet) subsequently binds. Helps modulate mRNA selection, yielding the 30S pre-initiation complex (PIC). Upon addition of the 50S ribosomal subunit IF-1, IF-2 and IF-3 are released leaving the mature 70S translation initiation complex. The polypeptide is Translation initiation factor IF-1, chloroplastic (Lactuca sativa (Garden lettuce)).